The primary structure comprises 513 residues: ATP synthase subunit alpha (513 aa).

169–176 lines the ATP pocket; the sequence is GDRQTGKT.

This sequence belongs to the ATPase alpha/beta chains family. F-type ATPases have 2 components, CF(1) - the catalytic core - and CF(0) - the membrane proton channel. CF(1) has five subunits: alpha(3), beta(3), gamma(1), delta(1), epsilon(1). CF(0) has three main subunits: a(1), b(2) and c(9-12). The alpha and beta chains form an alternating ring which encloses part of the gamma chain. CF(1) is attached to CF(0) by a central stalk formed by the gamma and epsilon chains, while a peripheral stalk is formed by the delta and b chains.

Its subcellular location is the cell inner membrane. It carries out the reaction ATP + H2O + 4 H(+)(in) = ADP + phosphate + 5 H(+)(out). Functionally, produces ATP from ADP in the presence of a proton gradient across the membrane. The alpha chain is a regulatory subunit. The protein is ATP synthase subunit alpha of Enterobacter sp. (strain 638).